Here is a 196-residue protein sequence, read N- to C-terminus: Calcineurin B homologous protein 2 (196 aa).

Gly-2 carries the N-myristoyl glycine lipid modification. EF-hand domains are found at residues 26–61 (ASLL…AVNP), 71–106 (FPDG…PKKP), 111–146 (SRRN…MVGV), and 152–187 (QLEN…MDVE). The residue at position 27 (Ser-27) is a Phosphoserine. Residues Asp-124, Asp-126, Asp-128, Lys-130, and Glu-135 each coordinate Ca(2+). The Nuclear export signal motif lies at 137–148 (LQVLRLMVGVQV). 4 residues coordinate Ca(2+): Asp-165, Asp-167, Asp-169, and Glu-176.

The protein belongs to the calcineurin regulatory subunit family. CHP subfamily. In terms of assembly, interacts with PPP3CA. Interacts with SLC9A1/NHE1; the interaction occurs in a calcium-dependent manner. As to expression, expressed in malignantly transformed cells but not detected in normal tissues.

The protein localises to the nucleus. The protein resides in the cytoplasm. It localises to the cell membrane. Its function is as follows. Functions as an integral cofactor in cell pH regulation by controlling plasma membrane-type Na(+)/H(+) exchange activity. Binds to and activates SLC9A1/NHE1 in a serum-independent manner, thus increasing pH and protecting cells from serum deprivation-induced death. Also plays a role in the regulation of cell proliferation and tumor growth by increasing the phosphatase activity of PPP3CA in a calcium-dependent manner. Activator of the calcineurin/NFAT signaling pathway. Involved in the cytoplasmic translocation of the transcription factor NFATC3 to the nucleus. This is Calcineurin B homologous protein 2 (CHP2) from Homo sapiens (Human).